The following is a 393-amino-acid chain: Cholinephosphotransferase 1 (393 aa).

Over 1 to 40 the chain is Lumenal; sequence MGFFIPQSSLGNLKLYKYQSDDRSFLSNHVLRPFWRKFAT. A helical transmembrane segment spans residues 41–61; the sequence is IFPLWMAPNLVTLLGFCFIIF. The Cytoplasmic portion of the chain corresponds to 62 to 172; sequence NVLTTLYYDP…YHTHKLYLAE (111 aa). Residues 173-193 form a helical membrane-spanning segment; it reads FCGPVEGIIVLCISFIAVGIY. Residues 194 to 210 are Lumenal-facing; it reads GPQTIWHTKVAQFSWQD. Residues 211-231 traverse the membrane as a helical segment; sequence FVFDVETVHLMYAFCTGALIF. Over 232 to 263 the chain is Cytoplasmic; that stretch reads NIVTAHTNVVRYYESQSTKSATPSKTAENISK. Residues 264-284 traverse the membrane as a helical segment; sequence AVNGLLPFFAYFSSIFTLVLI. Residue Q285 is a topological domain, lumenal. The chain crosses the membrane as a helical span at residues 286–306; the sequence is PSFISLALILSIGFSVAFVVG. Residues 307 to 320 lie on the Cytoplasmic side of the membrane; it reads RMIIAHLTMQPFPM. Residues 321 to 341 traverse the membrane as a helical segment; the sequence is VNFPFLIPTIQLVLYAFMVYV. Residues 342–348 are Lumenal-facing; the sequence is LDYQKGS. The chain crosses the membrane as a helical span at residues 349–369; that stretch reads IVSALVWMGLGLTLAIHGMFI. Residues 370-393 lie on the Cytoplasmic side of the membrane; that stretch reads NDIIYDITTFLDIYALSIKHPKEI.

It belongs to the CDP-alcohol phosphatidyltransferase class-I family. Requires Mg(2+) as cofactor.

Its subcellular location is the microsome membrane. The protein resides in the endoplasmic reticulum membrane. It is found in the mitochondrion outer membrane. The enzyme catalyses CDP-choline + a 1,2-diacyl-sn-glycerol = a 1,2-diacyl-sn-glycero-3-phosphocholine + CMP + H(+). It catalyses the reaction CDP-N,N-dimethylethanolamine + a 1,2-diacyl-sn-glycerol = a 1,2-diacyl-sn-glycero-3-phospho-N,N-dimethylethanolamine + CMP + H(+). It participates in phospholipid metabolism; phosphatidylcholine biosynthesis; phosphatidylcholine from phosphocholine: step 2/2. Requires a divalent cation activator, and is inhibited by CMP. Activated by phospholipids, especially phosphatidylcholine. Catalyzes the final step in the CDP-choline route leading to phosphatidylcholin (PC). Preferentially uses CDP-monomethylethanolamine as aminoalcohol substrate. Shows highest activity toward di- and mono-unsaturated diacylglycerol species as lipid substrates. The CDP-choline pathway only contributes to net PC synthesis if exogenous choline is present. In its absence, this pathway recycles choline from PC turnover and may contribute to maintaining the proper PC species composition. The polypeptide is Cholinephosphotransferase 1 (CPT1) (Saccharomyces cerevisiae (strain ATCC 204508 / S288c) (Baker's yeast)).